The following is a 156-amino-acid chain: Snaclec A3 (156 aa).

An N-terminal signal peptide occupies residues 1-23 (MGRSISVSFGLLVVFLSLSGTGA). 3 disulfides stabilise this stretch: Cys27–Cys38, Cys55–Cys154, and Cys129–Cys146. The C-type lectin domain occupies 34 to 155 (HEGHCYKVFN…CGQPYRFTCE (122 aa)).

The protein belongs to the snaclec family. As to quaternary structure, heterodimer; disulfide-linked. Expressed by the venom gland.

It localises to the secreted. Its function is as follows. Interferes with one step of hemostasis (modulation of platelet aggregation, or coagulation cascade, for example). The sequence is that of Snaclec A3 from Macrovipera lebetinus (Levantine viper).